Consider the following 368-residue polypeptide: tRNA/tmRNA (uracil-C(5))-methyltransferase (368 aa).

Residues Gln192, Tyr220, Asn225, Glu241, and Asp301 each coordinate S-adenosyl-L-methionine. Residue Cys326 is the Nucleophile of the active site. Catalysis depends on Glu360, which acts as the Proton acceptor.

Belongs to the class I-like SAM-binding methyltransferase superfamily. RNA M5U methyltransferase family. TrmA subfamily.

It catalyses the reaction uridine(54) in tRNA + S-adenosyl-L-methionine = 5-methyluridine(54) in tRNA + S-adenosyl-L-homocysteine + H(+). The enzyme catalyses uridine(341) in tmRNA + S-adenosyl-L-methionine = 5-methyluridine(341) in tmRNA + S-adenosyl-L-homocysteine + H(+). Dual-specificity methyltransferase that catalyzes the formation of 5-methyluridine at position 54 (m5U54) in all tRNAs, and that of position 341 (m5U341) in tmRNA (transfer-mRNA). The polypeptide is tRNA/tmRNA (uracil-C(5))-methyltransferase (Actinobacillus pleuropneumoniae serotype 5b (strain L20)).